Reading from the N-terminus, the 179-residue chain is Gamma-glutamyl cyclotransferase verK (179 aa).

This sequence belongs to the class-I pyridoxal-phosphate-dependent aminotransferase family.

It carries out the reaction an alpha-(gamma-L-glutamyl)-L-amino acid = 5-oxo-L-proline + an L-alpha-amino acid. The protein operates within mycotoxin biosynthesis. In terms of biological role, gamma-glutamyl cyclotransferase; part of the gene cluster that mediates the biosynthesis of 11'-deoxyverticillin A, one of the dimeric epipolythiodioxopiperazines (ETPs) from the verticillin family that act as mycotoxins. 11'-deoxyverticillin A is required for normal conidiation. The nonribosomal peptide synthetase verP is speculated to be responsible for condensation of amino acids to form the carbon skeleton of verticillin, whereas the cluster-specific tailoring enzymes are involved in further modifications leading to the production of 11'-deoxyverticillin A. The protein is Gamma-glutamyl cyclotransferase verK of Clonostachys rogersoniana.